A 514-amino-acid polypeptide reads, in one-letter code: 2,3-bisphosphoglycerate-independent phosphoglycerate mutase (514 aa).

Positions 14 and 64 each coordinate Mn(2+). Residue S64 is the Phosphoserine intermediate of the active site. Substrate is bound by residues H125, 155-156 (RD), R187, R193, 263-266 (RADR), and K336. Mn(2+) contacts are provided by D403, H407, D444, H445, and H463.

Belongs to the BPG-independent phosphoglycerate mutase family. Monomer. Mn(2+) is required as a cofactor.

It carries out the reaction (2R)-2-phosphoglycerate = (2R)-3-phosphoglycerate. The protein operates within carbohydrate degradation; glycolysis; pyruvate from D-glyceraldehyde 3-phosphate: step 3/5. In terms of biological role, catalyzes the interconversion of 2-phosphoglycerate and 3-phosphoglycerate. The polypeptide is 2,3-bisphosphoglycerate-independent phosphoglycerate mutase (Shigella flexneri).